A 259-amino-acid chain; its full sequence is Global transcriptional regulator CodY (259 aa).

The GAF domain stretch occupies residues 1-155 (MNLLEKTRKI…GATVVGMEIL (155 aa)). A DNA-binding region (H-T-H motif) is located at residues 203-222 (ASKIADRVGITRSVIVNALR). Serine 215 is modified (phosphoserine).

This sequence belongs to the CodY family.

It is found in the cytoplasm. DNA-binding global transcriptional regulator which is involved in the adaptive response to starvation and acts by directly or indirectly controlling the expression of numerous genes in response to nutrient availability. During rapid exponential growth, CodY is highly active and represses genes whose products allow adaptation to nutrient depletion. The sequence is that of Global transcriptional regulator CodY from Lysinibacillus sphaericus (strain C3-41).